We begin with the raw amino-acid sequence, 499 residues long: NADH-quinone oxidoreductase subunit N (499 aa).

Helical transmembrane passes span Ala-16–Phe-36, Ala-42–Leu-62, Gly-77–Leu-97, Tyr-109–Ala-129, Val-133–Ile-153, Phe-167–Ala-187, Leu-208–Ala-228, Ala-252–Gly-272, Trp-274–Leu-294, Leu-302–Thr-322, Ala-327–Met-347, Gly-376–Ile-396, Thr-411–Tyr-433, and Gly-463–Leu-483.

The protein belongs to the complex I subunit 2 family. As to quaternary structure, NDH-1 is composed of 14 different subunits. Subunits NuoA, H, J, K, L, M, N constitute the membrane sector of the complex.

It localises to the cell inner membrane. The enzyme catalyses a quinone + NADH + 5 H(+)(in) = a quinol + NAD(+) + 4 H(+)(out). Functionally, NDH-1 shuttles electrons from NADH, via FMN and iron-sulfur (Fe-S) centers, to quinones in the respiratory chain. The immediate electron acceptor for the enzyme in this species is believed to be a menaquinone. Couples the redox reaction to proton translocation (for every two electrons transferred, four hydrogen ions are translocated across the cytoplasmic membrane), and thus conserves the redox energy in a proton gradient. The chain is NADH-quinone oxidoreductase subunit N from Salinibacter ruber (strain DSM 13855 / M31).